Consider the following 409-residue polypeptide: Glycosaminoglycan xylosylkinase (409 aa).

At 1–6 (MKLKQR) the chain is on the cytoplasmic side. The chain crosses the membrane as a helical; Signal-anchor for type II membrane protein span at residues 7 to 25 (VVVLCAVLFLLGLAKVFLL). At 26–409 (DGGEGSAASR…IEDRMNLPHP (384 aa)) the chain is on the lumenal side. The ATP site is built by glutamine 107 and lysine 123. Aspartate 142 is a Mn(2+) binding site. The N-linked (GlcNAc...) asparagine glycan is linked to asparagine 193. Disulfide bonds link cysteine 196–cysteine 211 and cysteine 201–cysteine 204. 222-225 (TLWL) contacts ATP. Disulfide bonds link cysteine 257-cysteine 331 and cysteine 332-cysteine 389. Aspartate 289 is an active-site residue. ATP-binding residues include glutamate 294 and aspartate 309. Residue aspartate 309 participates in Mn(2+) binding.

Belongs to the FAM20 family. The cofactor is Mn(2+).

The protein localises to the golgi apparatus membrane. It catalyses the reaction 3-O-(beta-D-galactosyl-(1-&gt;3)-beta-D-galactosyl-(1-&gt;4)-beta-D-xylosyl)-L-seryl-[protein] + ATP = 3-O-(beta-D-galactosyl-(1-&gt;3)-beta-D-galactosyl-(1-&gt;4)-beta-D-2-O-phosphoxylosyl)-L-seryl-[protein] + ADP + H(+). Responsible for the 2-O-phosphorylation of xylose in the glycosaminoglycan-protein linkage region of proteoglycans thereby regulating the amount of mature GAG chains. Sulfated glycosaminoglycans (GAGs), including heparan sulfate and chondroitin sulfate, are synthesized on the so-called common GAG-protein linkage region (GlcUAbeta1-3Galbeta1-3Galbeta1-4Xylbeta1-O-Ser) of core proteins, which is formed by the stepwise addition of monosaccharide residues by the respective specific glycosyltransferases. This chain is Glycosaminoglycan xylosylkinase, found in Danio rerio (Zebrafish).